Consider the following 447-residue polypeptide: Glutamate--tRNA ligase 1 (447 aa).

A 'HIGH' region motif is present at residues 10–20 (PSPTGMLHVGN). Residues 240–244 (KISKR) carry the 'KMSKS' region motif. Lys243 provides a ligand contact to ATP.

This sequence belongs to the class-I aminoacyl-tRNA synthetase family. Glutamate--tRNA ligase type 1 subfamily. As to quaternary structure, monomer.

It is found in the cytoplasm. The catalysed reaction is tRNA(Glu) + L-glutamate + ATP = L-glutamyl-tRNA(Glu) + AMP + diphosphate. In terms of biological role, catalyzes the attachment of glutamate to tRNA(Glu) in a two-step reaction: glutamate is first activated by ATP to form Glu-AMP and then transferred to the acceptor end of tRNA(Glu). The polypeptide is Glutamate--tRNA ligase 1 (Rickettsia akari (strain Hartford)).